Consider the following 396-residue polypeptide: Tryptophan synthase beta chain 1 (396 aa).

Lys86 is subject to N6-(pyridoxal phosphate)lysine.

It belongs to the TrpB family. Tetramer of two alpha and two beta chains. Requires pyridoxal 5'-phosphate as cofactor.

It catalyses the reaction (1S,2R)-1-C-(indol-3-yl)glycerol 3-phosphate + L-serine = D-glyceraldehyde 3-phosphate + L-tryptophan + H2O. The protein operates within amino-acid biosynthesis; L-tryptophan biosynthesis; L-tryptophan from chorismate: step 5/5. Functionally, the beta subunit is responsible for the synthesis of L-tryptophan from indole and L-serine. In Vibrio parahaemolyticus serotype O3:K6 (strain RIMD 2210633), this protein is Tryptophan synthase beta chain 1 (trpB1).